A 484-amino-acid chain; its full sequence is ATP synthase subunit beta (484 aa).

Residue 168 to 175 (GGAGVGKT) participates in ATP binding.

It belongs to the ATPase alpha/beta chains family. As to quaternary structure, F-type ATPases have 2 components, CF(1) - the catalytic core - and CF(0) - the membrane proton channel. CF(1) has five subunits: alpha(3), beta(3), gamma(1), delta(1), epsilon(1). CF(0) has three main subunits: a(1), b(2) and c(9-12). The alpha and beta chains form an alternating ring which encloses part of the gamma chain. CF(1) is attached to CF(0) by a central stalk formed by the gamma and epsilon chains, while a peripheral stalk is formed by the delta and b chains.

It is found in the cell membrane. The enzyme catalyses ATP + H2O + 4 H(+)(in) = ADP + phosphate + 5 H(+)(out). Functionally, produces ATP from ADP in the presence of a proton gradient across the membrane. The catalytic sites are hosted primarily by the beta subunits. This is ATP synthase subunit beta from Pseudarthrobacter chlorophenolicus (strain ATCC 700700 / DSM 12829 / CIP 107037 / JCM 12360 / KCTC 9906 / NCIMB 13794 / A6) (Arthrobacter chlorophenolicus).